The primary structure comprises 533 residues: Probable anion transporter 4, chloroplastic (533 aa).

12 consecutive transmembrane segments (helical) span residues 117 to 137 (MLALALALCNADRVVMSVAIV), 152 to 172 (IVQSSFLWGYLISPIAGGTLV), 179 to 199 (VVMAWGVALWSLATFLTPWAA), 203 to 223 (LWALLAARAMVGVAEGVALPC), 243 to 263 (IAMAGFQLGNVVGLMLSPILM), 267 to 287 (GIYGPFVIFGLSGFLWLLVWL), 342 to 362 (VIVANSMHSWGFFVILSWMPI), 376 to 396 (AWFSAVPWSMMAFTGYIAGFW), 417 to 437 (IGFIGPGIALIGLTTAKQPLV), 438 to 458 (ASAWLSLAVGLKSFSHLGFLI), 474 to 494 (MCLTAGTLAAIVGTVGAGFFV), and 502 to 522 (GFILLTAILYLLSALFYNIYA).

It belongs to the major facilitator superfamily. Sodium/anion cotransporter (TC 2.A.1.14) family. Expressed in leaf veins and root tips.

The protein localises to the plastid. It localises to the chloroplast membrane. Inorganic phosphate and probable anion transporter. This is Probable anion transporter 4, chloroplastic (ANTR4) from Arabidopsis thaliana (Mouse-ear cress).